Consider the following 327-residue polypeptide: Clavesin-2 (327 aa).

The 162-residue stretch at 96-257 folds into the CRAL-TRIO domain; it reads IKQALKDGFP…EFGGMLPPYD (162 aa). Residues 288-327 form a disordered region; sequence VDKELSPKSMKRSQSVVDPTALKRMDKSEEENMQPLLSLD. S325 carries the phosphoserine modification.

In terms of assembly, forms a complex with clathrin heavy chain and gamma-adaptin. In terms of tissue distribution, expressed in brain with no expression detected in non-neuronal tissues (at protein level).

It is found in the golgi apparatus. The protein resides in the trans-Golgi network membrane. Its subcellular location is the early endosome membrane. The protein localises to the cytoplasmic vesicle. It localises to the clathrin-coated vesicle. Its function is as follows. Required for normal morphology of late endosomes and/or lysosomes in neurons. Binds phosphatidylinositol 3,5-bisphosphate (PtdIns(3,5)P2). This Rattus norvegicus (Rat) protein is Clavesin-2.